A 344-amino-acid polypeptide reads, in one-letter code: Oxygen sensor histidine kinase NreB (344 aa).

[4Fe-4S] cluster is bound by residues cysteine 58, cysteine 61, cysteine 73, and cysteine 76. A Histidine kinase domain is found at glutamate 147 to isoleucine 344. Phosphohistidine; by autocatalysis is present on histidine 158.

[4Fe-4S] cluster serves as cofactor. Autophosphorylated.

It is found in the cytoplasm. The catalysed reaction is ATP + protein L-histidine = ADP + protein N-phospho-L-histidine.. Functionally, member of the two-component regulatory system NreB/NreC involved in the control of dissimilatory nitrate/nitrite reduction in response to oxygen. NreB functions as a direct oxygen sensor histidine kinase which is autophosphorylated, in the absence of oxygen, probably at the conserved histidine residue, and transfers its phosphate group probably to a conserved aspartate residue of NreC. NreB/NreC activates the expression of the nitrate (narGHJI) and nitrite (nir) reductase operons, as well as the putative nitrate transporter gene narT. In Staphylococcus epidermidis (strain ATCC 12228 / FDA PCI 1200), this protein is Oxygen sensor histidine kinase NreB (nreB).